The sequence spans 55 residues: ATP synthase F(0) complex subunit 8 (55 aa).

A helical membrane pass occupies residues 10 to 32; it reads FFTMLTTWLTFLLLIQPKLLSFI.

Belongs to the ATPase protein 8 family. As to quaternary structure, component of the ATP synthase complex composed at least of ATP5F1A/subunit alpha, ATP5F1B/subunit beta, ATP5MC1/subunit c (homooctomer), MT-ATP6/subunit a, MT-ATP8/subunit 8, ATP5ME/subunit e, ATP5MF/subunit f, ATP5MG/subunit g, ATP5MK/subunit k, ATP5MJ/subunit j, ATP5F1C/subunit gamma, ATP5F1D/subunit delta, ATP5F1E/subunit epsilon, ATP5PF/subunit F6, ATP5PB/subunit b, ATP5PD/subunit d, ATP5PO/subunit OSCP. ATP synthase complex consists of a soluble F(1) head domain (subunits alpha(3) and beta(3)) - the catalytic core - and a membrane F(0) domain - the membrane proton channel (subunits c, a, 8, e, f, g, k and j). These two domains are linked by a central stalk (subunits gamma, delta, and epsilon) rotating inside the F1 region and a stationary peripheral stalk (subunits F6, b, d, and OSCP).

It localises to the mitochondrion membrane. In terms of biological role, subunit 8, of the mitochondrial membrane ATP synthase complex (F(1)F(0) ATP synthase or Complex V) that produces ATP from ADP in the presence of a proton gradient across the membrane which is generated by electron transport complexes of the respiratory chain. ATP synthase complex consist of a soluble F(1) head domain - the catalytic core - and a membrane F(1) domain - the membrane proton channel. These two domains are linked by a central stalk rotating inside the F(1) region and a stationary peripheral stalk. During catalysis, ATP synthesis in the catalytic domain of F(1) is coupled via a rotary mechanism of the central stalk subunits to proton translocation. In vivo, can only synthesize ATP although its ATP hydrolase activity can be activated artificially in vitro. Part of the complex F(0) domain. The protein is ATP synthase F(0) complex subunit 8 of Guira guira (Guira cuckoo).